Reading from the N-terminus, the 341-residue chain is Methionine import ATP-binding protein MetN 2 (341 aa).

An ABC transporter domain is found at 2–241 (IELKEVVKEY…PQHTVTKRFV (240 aa)). 38 to 45 (GFSGAGKS) is a binding site for ATP.

This sequence belongs to the ABC transporter superfamily. Methionine importer (TC 3.A.1.24) family. The complex is composed of two ATP-binding proteins (MetN), two transmembrane proteins (MetI) and a solute-binding protein (MetQ).

Its subcellular location is the cell membrane. It catalyses the reaction L-methionine(out) + ATP + H2O = L-methionine(in) + ADP + phosphate + H(+). The catalysed reaction is D-methionine(out) + ATP + H2O = D-methionine(in) + ADP + phosphate + H(+). Functionally, part of the ABC transporter complex MetNIQ involved in methionine import. Responsible for energy coupling to the transport system. This Staphylococcus aureus (strain bovine RF122 / ET3-1) protein is Methionine import ATP-binding protein MetN 2.